The primary structure comprises 711 residues: MTLVMSPDSSYGRYDAPAPADNRIMSPVHKEREPELHIEFDGTTVLCRVCGDKASGFHYGVHSCEGCKGFFRRSIQQKIQYRPCTKNQQCSILRINRNRCQYCRLKKCIAVGMSRDAVRFGRVPKREKARILAAMQSSTTRAHEQAAAAELDDGPRLLARVVRAHLDTCEFTRDRVAAMRNGARDCPTYSQPTLACPLNPAPELQSEKEFSQRFAHVIRGVIDFAGLIPGFQLLTQDDKFTLLKSGLFDALFVRLICMFDAPLNSIICLNGQLMKRDSIQSGANARFLVDSTFKFAERMNSMNLTDAEIGLFCAIVLITPDRPGLRNVELVERMHSRLKSCLQTVIAQNRSDGPGFLRELMDTLPDLRTLSTLHTEKLVVFRTEHKELLRQQMWVEDEGALWADSGADDSARSPIGSVSSSESSETTGDCGTPLLAATLAGRRRLDSRGSVDEEALGVAHLAHNGLTVTPVRPPPRYRKLDSPTDSGIESGNEKHERIVGPESGCSSPRSSLEEHSDDRRPIAPADDMPVLKRVLQAPPLYDASSLMDEAYKPHKKFRAMRRDTWSEAEARPGRPTPSPQPPHHPHPASPAHPAHSPRPIRAPLSSTHSVLAKSLMEGPRMTPEQLKRTDIIQQYMRRGETGAPTEGCPLRAGGLLTCFRGASPAPQPVIALQVDVAETDAPQPLNLSKKSPSPSPPPPPPRSYMPPMLPA.

The segment at residues 44 to 120 (TVLCRVCGDK…VGMSRDAVRF (77 aa)) is a DNA-binding region (nuclear receptor). 2 consecutive NR C4-type zinc fingers follow at residues 47-67 (CRVC…CEGC) and 84-108 (CTKN…LKKC). The region spanning 153–400 (DGPRLLARVV…QQMWVEDEGA (248 aa)) is the NR LBD domain. Disordered stretches follow at residues 405 to 432 (SGAD…DCGT), 466 to 530 (LTVT…DMPV), 559 to 602 (AMRR…PIRA), and 680 to 711 (DAPQ…MLPA). Composition is skewed to basic and acidic residues over residues 511-521 (SLEEHSDDRRP) and 560-572 (MRRD…EARP). Residues 574–590 (RPTPSPQPPHHPHPASP) show a composition bias toward pro residues. 2 stretches are compositionally biased toward low complexity: residues 591–602 (AHPAHSPRPIRA) and 682–692 (PQPLNLSKKSP). The segment covering 693-711 (SPSPPPPPPRSYMPPMLPA) has biased composition (pro residues).

It belongs to the nuclear hormone receptor family. NR1 subfamily.

It localises to the nucleus. Functionally, orphan receptor possibly involved in the regulation of genes in the ecdysteroid cascade. This chain is Ecdysone-inducible protein E75 (E75), found in Galleria mellonella (Greater wax moth).